A 188-amino-acid polypeptide reads, in one-letter code: Probable manganese efflux pump MntP (188 aa).

6 helical membrane-spanning segments follow: residues 3 to 23, 41 to 61, 66 to 86, 106 to 128, 143 to 163, and 168 to 188; these read FTATVLLAFGMSMDAFAASIG, LIFGAVETLTPLIGWGLGILA, LEWNHWIAFVLLIFLGGRMII, WLLVTTAIATSLDAMAVGVGLAF, ATLIMSTLGMMIGRFIGPMLG, and ILGGVVLIGIGVQILWTHFHG.

This sequence belongs to the MntP (TC 9.B.29) family.

The protein localises to the cell inner membrane. Functionally, probably functions as a manganese efflux pump. This Salmonella typhimurium (strain LT2 / SGSC1412 / ATCC 700720) protein is Probable manganese efflux pump MntP.